The sequence spans 438 residues: Transposon Ty2-GR1 Gag polyprotein (438 aa).

3 stretches are compositionally biased toward polar residues: residues Met-1–His-11, Ala-19–Asn-39, and Lys-49–Thr-60. Disordered stretches follow at residues Met-1 to Gln-86, His-360 to Ser-403, and Val-418 to Ile-438. The segment at Glu-295–His-397 is RNA-binding. Over residues Thr-369–Arg-381 the composition is skewed to low complexity.

In terms of assembly, homotrimer.

The protein localises to the cytoplasm. Its function is as follows. Capsid protein (CA) is the structural component of the virus-like particle (VLP), forming the shell that encapsulates the retrotransposons dimeric RNA genome. The particles are assembled from trimer-clustered units and there are holes in the capsid shells that allow for the diffusion of macromolecules. CA also has nucleocapsid-like chaperone activity, promoting primer tRNA(i)-Met annealing to the multipartite primer-binding site (PBS), dimerization of Ty2 RNA and initiation of reverse transcription. The protein is Transposon Ty2-GR1 Gag polyprotein (TY2A-GR1) of Saccharomyces cerevisiae (strain ATCC 204508 / S288c) (Baker's yeast).